The primary structure comprises 442 residues: Glutamate synthase large subunit-like protein (442 aa).

A disordered region spans residues 108-133 (LGRGATASGTSTTTGDGGMTDEERGH). Positions 109-121 (GRGATASGTSTTT) are enriched in low complexity.

The protein belongs to the glutamate synthase family.

This chain is Glutamate synthase large subunit-like protein (glxD), found in Rhizobium meliloti (strain 1021) (Ensifer meliloti).